The sequence spans 664 residues: Ubiquinol oxidase subunit 1 (664 aa).

2 helical membrane-spanning segments follow: residues 15–35 (PILV…LGLI) and 57–77 (LAAM…ADAI). Position 106 (His-106) interacts with heme b. Helical transmembrane passes span 109–129 (IMIF…IVPL), 136–156 (VAFP…FILV), 190–210 (YIWA…NFFV), 233–253 (LCAS…VGLL), 278–298 (LIWA…FGVF), 316–336 (MVYA…HHFF), 347–367 (FFGI…FNWL), 383–403 (WAVG…MLAI), 414–434 (LFLI…GYIC), 456–476 (AFWF…IVGF), 490–510 (AWHP…LGIA), and 603–623 (ALIF…VGLV). Residues His-284, Tyr-288, His-333, and His-334 each contribute to the Cu cation site. Positions 284 to 288 (HPEVY) form a cross-link, 1'-histidyl-3'-tyrosine (His-Tyr). His-419 serves as a coordination point for Fe(II)-heme a. A heme b-binding site is contributed by His-421.

The protein belongs to the heme-copper respiratory oxidase family. Heterotetramer of the subunits 1, 2, 3 and 4.

Its subcellular location is the cell membrane. Catalytic subunit of the enzyme. Electrons originating in a quinol are transferred to the bimetallic center formed by heme a and copper B. The protein is Ubiquinol oxidase subunit 1 (cyaA) of Acetobacter aceti.